We begin with the raw amino-acid sequence, 174 residues long: Suppressor of RNA silencing (174 aa).

The stretch at 86 to 116 (HAQLRSLNAELDTLEAREESLRAQIKALSAG) forms a coiled coil.

It belongs to the virgaviridae suppressor of RNA silencing family.

In terms of biological role, suppressor of RNA-mediated gene silencing, also known as post-transcriptional gene silencing (PTGS), a mechanism of plant viral defense that performs sequence-specific inhibition of viral mRNAs expression. This Soil-borne wheat mosaic virus (strain United States/Nebraska/1981) (SBWMV) protein is Suppressor of RNA silencing.